Reading from the N-terminus, the 498-residue chain is Glycerol kinase (498 aa).

T12 lines the ADP pocket. ATP contacts are provided by T12, T13, and S14. T12 contributes to the sn-glycerol 3-phosphate binding site. Residue R16 participates in ADP binding. Positions 82, 83, 134, and 244 each coordinate sn-glycerol 3-phosphate. Glycerol contacts are provided by R82, E83, Y134, D244, and Q245. The ADP site is built by T266 and G310. ATP contacts are provided by T266, G310, Q314, and G411. Residues G411 and N415 each contribute to the ADP site.

It belongs to the FGGY kinase family.

The catalysed reaction is glycerol + ATP = sn-glycerol 3-phosphate + ADP + H(+). The protein operates within polyol metabolism; glycerol degradation via glycerol kinase pathway; sn-glycerol 3-phosphate from glycerol: step 1/1. Inhibited by fructose 1,6-bisphosphate (FBP). Functionally, key enzyme in the regulation of glycerol uptake and metabolism. Catalyzes the phosphorylation of glycerol to yield sn-glycerol 3-phosphate. The sequence is that of Glycerol kinase from Roseiflexus sp. (strain RS-1).